The following is a 395-amino-acid chain: Major outer membrane porin, serovar F (395 aa).

The signal sequence occupies residues 1 to 22 (MKKLLKSVLVFAALSSASSLQA).

Belongs to the chlamydial porin (CP) (TC 1.B.2) family. In terms of assembly, part of a disulfide cross-linked outer membrane complex (COMC) composed of the major outer membrane porin (MOMP), the small cysteine-rich protein (OmcA) and the large cysteine-rich periplasmic protein (OmcB).

It is found in the cell outer membrane. Its function is as follows. In elementary bodies (EBs, the infectious stage, which is able to survive outside the host cell) provides the structural integrity of the outer envelope through disulfide cross-links with the small cysteine-rich protein and the large cysteine-rich periplasmic protein. It has been described in publications as the Sarkosyl-insoluble COMC (Chlamydia outer membrane complex), and serves as the functional equivalent of peptidoglycan. In terms of biological role, permits diffusion of specific solutes through the outer membrane. In Chlamydia trachomatis, this protein is Major outer membrane porin, serovar F (ompA).